We begin with the raw amino-acid sequence, 479 residues long: Ribosomal RNA small subunit methyltransferase F (479 aa).

S-adenosyl-L-methionine contacts are provided by residues 125–131 (AAAPGSK), Glu-149, Asp-176, and Asp-194. Cys-247 acts as the Nucleophile in catalysis.

The protein belongs to the class I-like SAM-binding methyltransferase superfamily. RsmB/NOP family.

Its subcellular location is the cytoplasm. It catalyses the reaction cytidine(1407) in 16S rRNA + S-adenosyl-L-methionine = 5-methylcytidine(1407) in 16S rRNA + S-adenosyl-L-homocysteine + H(+). Its function is as follows. Specifically methylates the cytosine at position 1407 (m5C1407) of 16S rRNA. This Escherichia coli (strain ATCC 8739 / DSM 1576 / NBRC 3972 / NCIMB 8545 / WDCM 00012 / Crooks) protein is Ribosomal RNA small subunit methyltransferase F.